Reading from the N-terminus, the 415-residue chain is D-threonate kinase (415 aa).

Substrate is bound by residues Asp-9, Arg-53, and 81–84; that span reads KIDS. ATP-binding positions include Ser-251, 345–348, and Gly-392; that span reads GGET.

This sequence belongs to the four-carbon acid sugar kinase family.

It catalyses the reaction D-threonate + ATP = 4-O-phospho-D-threonate + ADP + H(+). Catalyzes the ATP-dependent phosphorylation of D-threonate to D-threonate 4-phosphate. Can also phosphorylate 4-hydroxy-L-threonine, with lower efficiency. The chain is D-threonate kinase from Cupriavidus necator (strain ATCC 17699 / DSM 428 / KCTC 22496 / NCIMB 10442 / H16 / Stanier 337) (Ralstonia eutropha).